The chain runs to 479 residues: Tegument protein VP16 homolog (479 aa).

This sequence belongs to the herpesviridae tegument protein VP16 protein family. As to quaternary structure, associates with the VP16-induced complex; binding to host HCFC1 activates VP16 for association with the octamer motif-binding host protein POU2F1, to form a multiprotein-DNA complex responsible for activating transcription of the viral immediate early genes.

The protein localises to the virion tegument. It localises to the host nucleus. Its function is as follows. Transcriptional activator of immediate-early (IE) gene products (alpha genes). Acts as a key activator of lytic infection by initiating the lytic program through the assembly of the transcriptional regulatory VP16-induced complex composed of VP16 and two cellular factors, HCFC1 and POU2F1. VP16-induced complex represents a regulatory switch: when it is on, it promotes IE-gene expression and thus lytic infection, and when it is off, it limits IE-gene transcription favoring latent infection. In terms of biological role, may play a role in the aggregation of tegument proteins around nucleocapsids during virus morphogenesis. The sequence is that of Tegument protein VP16 homolog from Equus caballus (Horse).